The sequence spans 267 residues: Probable beta-lactamase YbxI (267 aa).

Positions 1–23 (MKKWIYVVLVLSIAGIGGFSVHA) are cleaved as a signal peptide. S76 functions as the Acyl-ester intermediate in the catalytic mechanism. K79 bears the N6-carboxylysine mark. 214-216 (KTG) contacts substrate.

It belongs to the class-D beta-lactamase family.

The catalysed reaction is a beta-lactam + H2O = a substituted beta-amino acid. This Bacillus subtilis (strain 168) protein is Probable beta-lactamase YbxI (ybxI).